Consider the following 497-residue polypeptide: Galactose-1-phosphate uridylyltransferase (497 aa).

This sequence belongs to the galactose-1-phosphate uridylyltransferase type 2 family.

It localises to the cytoplasm. The catalysed reaction is alpha-D-galactose 1-phosphate + UDP-alpha-D-glucose = alpha-D-glucose 1-phosphate + UDP-alpha-D-galactose. It functions in the pathway carbohydrate metabolism; galactose metabolism. In Enterococcus faecalis (strain ATCC 700802 / V583), this protein is Galactose-1-phosphate uridylyltransferase.